A 113-amino-acid polypeptide reads, in one-letter code: UPF0102 protein Shal_4069 (113 aa).

This sequence belongs to the UPF0102 family.

The polypeptide is UPF0102 protein Shal_4069 (Shewanella halifaxensis (strain HAW-EB4)).